Consider the following 787-residue polypeptide: Endonuclease MutS2 (787 aa).

334–341 (GPNTGGKT) is an ATP binding site. The interval 685-709 (KAQDPAKSAKQPRASVKRSGSSGMS) is disordered. A Smr domain is found at 712–787 (LDLRGHRYEE…GDGSTVVHFK (76 aa)).

It belongs to the DNA mismatch repair MutS family. MutS2 subfamily. As to quaternary structure, homodimer. Binds to stalled ribosomes, contacting rRNA.

Its function is as follows. Endonuclease that is involved in the suppression of homologous recombination and thus may have a key role in the control of bacterial genetic diversity. In terms of biological role, acts as a ribosome collision sensor, splitting the ribosome into its 2 subunits. Detects stalled/collided 70S ribosomes which it binds and splits by an ATP-hydrolysis driven conformational change. Acts upstream of the ribosome quality control system (RQC), a ribosome-associated complex that mediates the extraction of incompletely synthesized nascent chains from stalled ribosomes and their subsequent degradation. Probably generates substrates for RQC. The polypeptide is Endonuclease MutS2 (Levilactobacillus brevis (strain ATCC 367 / BCRC 12310 / CIP 105137 / JCM 1170 / LMG 11437 / NCIMB 947 / NCTC 947) (Lactobacillus brevis)).